A 113-amino-acid chain; its full sequence is Ribonuclease P protein component (113 aa).

It belongs to the RnpA family. Consists of a catalytic RNA component (M1 or rnpB) and a protein subunit.

The enzyme catalyses Endonucleolytic cleavage of RNA, removing 5'-extranucleotides from tRNA precursor.. Its function is as follows. RNaseP catalyzes the removal of the 5'-leader sequence from pre-tRNA to produce the mature 5'-terminus. It can also cleave other RNA substrates such as 4.5S RNA. The protein component plays an auxiliary but essential role in vivo by binding to the 5'-leader sequence and broadening the substrate specificity of the ribozyme. The protein is Ribonuclease P protein component of Clavibacter michiganensis subsp. michiganensis (strain NCPPB 382).